The primary structure comprises 305 residues: N-acetylmuramic acid 6-phosphate etherase (305 aa).

Residues 61–224 (ISDALAKGGR…STGAMVKLGK (164 aa)) form the SIS domain. Glu-89 (proton donor) is an active-site residue. Glu-120 is a catalytic residue.

It belongs to the GCKR-like family. MurNAc-6-P etherase subfamily. Homodimer.

It catalyses the reaction N-acetyl-D-muramate 6-phosphate + H2O = N-acetyl-D-glucosamine 6-phosphate + (R)-lactate. The protein operates within amino-sugar metabolism; N-acetylmuramate degradation. Its function is as follows. Specifically catalyzes the cleavage of the D-lactyl ether substituent of MurNAc 6-phosphate, producing GlcNAc 6-phosphate and D-lactate. The polypeptide is N-acetylmuramic acid 6-phosphate etherase (Synechocystis sp. (strain ATCC 27184 / PCC 6803 / Kazusa)).